A 234-amino-acid polypeptide reads, in one-letter code: Opacity protein opA65 (234 aa).

A signal peptide is located at residue Ala-1. The interval 154–179 is disordered; the sequence is TVTPKPKNGTQGGPVKSTSPIPAYHE.

The protein belongs to the opacity porin family.

It is found in the cell outer membrane. Its function is as follows. Implicated in a number of adherence functions. OPA proteins are implicated in pathogenesis and are subject to phase variation. This is Opacity protein opA65 from Neisseria gonorrhoeae.